A 543-amino-acid polypeptide reads, in one-letter code: Rop guanine nucleotide exchange factor 11 (543 aa).

The disordered stretch occupies residues 61 to 89 (QPGKCGSVDRPSLPIGGVTPNRNDKLPRV). Residues 95 to 456 (MEALIILQAA…QLTQEPTNNA (362 aa)) form the PRONE domain.

In terms of assembly, interacts with ARAC4/ROP2, ARAC3/ROP, ARAC9/ROP8, PHYA and PHYB. As to expression, highly expressed in elongating regions of roots and pollen grains. Expressed in flowers, and at lower levels in leaves and stems.

It localises to the cytoplasm. In terms of biological role, guanine-nucleotide exchange factor (GEF) that acts as an activator of Rop (Rho of plants) GTPases by promoting the exchange of GDP for GTP. Functions as a light-signaling switch that functions in root growth and development through the activation of Rop in a phytochrome-dependent manner. May act as a negative regulator of phytochrome-mediated primary root development. In Arabidopsis thaliana (Mouse-ear cress), this protein is Rop guanine nucleotide exchange factor 11 (ROPGEF11).